A 328-amino-acid chain; its full sequence is Homeobox protein Hox-D1 (328 aa).

Residues 204–209 carry the Antp-type hexapeptide motif; the sequence is TFEWMK. A DNA-binding region (homeobox) is located at residues 229-288; that stretch reads SSAIRTNFSTKQLTELEKEFHFNKYLTRARRIEIANCLHLNDTQVKIWFQNRRMKQKKRE. The interval 305–328 is disordered; sequence PLSGTTPTKFIKNPGSPSQSQEPS. Polar residues predominate over residues 319 to 328; that stretch reads GSPSQSQEPS.

It belongs to the Antp homeobox family. Labial subfamily.

Its subcellular location is the nucleus. Sequence-specific transcription factor which is part of a developmental regulatory system that provides cells with specific positional identities on the anterior-posterior axis. Acts on the anterior body structures. This chain is Homeobox protein Hox-D1 (HOXD1), found in Homo sapiens (Human).